Reading from the N-terminus, the 100-residue chain is Spleen trypsin inhibitor I (100 aa).

A signal peptide spans 1–21; that stretch reads MKMSRLCLSIALLVLLGTLAA. The propeptide occupies 22 to 33; the sequence is STPGCDTSNQAK. A BPTI/Kunitz inhibitor domain is found at 40–90; the sequence is CLEPPYTGPCKAKMIRYFYNAKAGFCETFVYGGCKAKSNNFRSAEDCMRTC. 3 disulfide bridges follow: C40–C90, C49–C73, and C65–C86. Residue L100 is a propeptide.

Its subcellular location is the secreted. In Bos taurus (Bovine), this protein is Spleen trypsin inhibitor I.